The following is a 414-amino-acid chain: MKINGVKGMNDVLPADVARWHEMESVAREVFALYGYREVRTPAVEHAALFARGVGEATDIVNKEMYVFEDKGEELLALRPEGTAGTVRAFIEHGAFVEGPQKWFYMGPMFRRERPQKGRYRQFHQIGCEAFGVAEPYLDAEQIALLADYFARLGVTAELKLNSVGDAQCRPAYLADLKAYLVANQGALCADCKDRIERNPLRVLDCKVESCQPVLEQAPQLLERLCEPCRTHFDQVKAGLDALGVAYRVEPRLVRGLDYYVRTAYEFTSDALGSQSAVAGGGRYDRLVETLGGPPTPGIGFALGEERLSMILEKVGRAMPERRPAVFFVSADATGALEALRLAAGLRRAGIACELDPRGGKLKAQFKQAERVGARWAVVLGGNEVATGQAKLKDLQTREETPVALSELAARVSG.

This sequence belongs to the class-II aminoacyl-tRNA synthetase family. Homodimer.

It is found in the cytoplasm. The catalysed reaction is tRNA(His) + L-histidine + ATP = L-histidyl-tRNA(His) + AMP + diphosphate + H(+). This is Histidine--tRNA ligase from Anaeromyxobacter sp. (strain K).